The chain runs to 1179 residues: Protein FAM83H (1179 aa).

The segment at M1–P286 is DUF1669. The mediates interaction with CSNK1A1 and is required for FAM83H activity in keratin cytoskeleton organization stretch occupies residues M1–P286. Residue T465 is modified to Phosphothreonine. 2 disordered regions span residues A484–G577 and F636–R669. Phosphoserine is present on residues S513, S514, S516, S523, S647, and S667. Phosphothreonine is present on T756. Residues S759, S785, and S813 each carry the phosphoserine modification. The interval R830–A1026 is disordered. Positions L836 to G847 are enriched in polar residues. Phosphoserine occurs at positions 870 and 881. Residue T883 is modified to Phosphothreonine. Residues P884 to S906 show a composition bias toward polar residues. S892 bears the Phosphoserine mark. The residue at position 894 (T894) is a Phosphothreonine. Residues S903, S914, S925, S936, S945, S1003, S1009, S1024, and S1025 each carry the phosphoserine modification. The residue at position 1040 (T1040) is a Phosphothreonine. Disordered stretches follow at residues I1047–M1084 and E1143–G1165. Residues S1048, S1068, and S1147 each carry the phosphoserine modification.

The protein belongs to the FAM83 family. Directly interacts (via DUF1669) with casein kinase isoforms CSNK1A1, CSNK1A1L, CSNK1D and CSNK1E. Interaction with CSNK1A1 recruits CSNK1A1 to keratin filaments. Interacts with KRT18 and probably other keratins. Expressed in the tooth follicle.

The protein resides in the cytoplasm. It is found in the cytoskeleton. Its function is as follows. May play a major role in the structural organization and calcification of developing enamel. May play a role in keratin cytoskeleton disassembly by recruiting CSNK1A1 to keratin filaments. Thereby, it may regulate epithelial cell migration. The sequence is that of Protein FAM83H from Homo sapiens (Human).